Here is a 633-residue protein sequence, read N- to C-terminus: MAHLKRLVKLHIKRHYHRKFWKLGAVIFFFLVVLILMQREVSVQYSKEESKMERNLKNKNKMLDFMLEAVNNIKDAMPKMQIGAPIKENIDVRERPCLQGYYTAAELKPVFDRPPQDSNAPGASGKPFKITHLSPEEQKEKERGETKHCFNAFASDRISLHRDLGPDTRPPECIEQKFKRCPPLPTTSVIIVFHNEAWSTLLRTVHSVLYSSPAILLKEIILVDDASVDDYLHEKLEEYIKQFSIVKIVRQQERKGLITARLLGAAVATAETLTFLDAHCECFYGWLEPLLARIAENYTAVVSPDIASIDLNTFEFNKPSPYGSNHNRGNFDWSLSFGWESLPDHEKQRRKDETYPIKTPTFAGGLFSISKKYFEHIGSYDEEMEIWGGENIEMSFRVWQCGGQLEIMPCSVVGHVFRSKSPHTFPKGTQVIARNQVRLAEVWMDEYKEIFYRRNTDAAKIVKQKSFGDLSKRFEIKKRLQCKNFTWYLNTIYPEAYVPDLNPVISGYIKSVGQPLCLDVGENNQGGKPLILYTCHGLGGNQYFEYSAQREIRHNIQKELCLHATQGVVQLKACVYKGHRTIAPGEQIWEIRKDQLLYNPLFKMCLSSNGEHPNLVPCDATDLLQKWIFSQND.

Topologically, residues methionine 1–lysine 19 are cytoplasmic. The helical; Signal-anchor for type II membrane protein transmembrane segment at phenylalanine 20–methionine 37 threads the bilayer. Topologically, residues glutamine 38 to aspartate 633 are lumenal. Positions aspartate 112–glutamate 145 are disordered. The span at serine 134 to glutamate 145 shows a compositional bias: basic and acidic residues. Residues leucine 184–arginine 293 are catalytic subdomain A. The Mn(2+) site is built by aspartate 277 and histidine 279. Asparagine 297 is a glycosylation site (N-linked (GlcNAc...) asparagine). Residues proline 356 to arginine 418 form a catalytic subdomain B region. Histidine 415 is a Mn(2+) binding site. A glycan (N-linked (GlcNAc...) asparagine) is linked at asparagine 484. Positions valine 504–serine 630 constitute a Ricin B-type lectin domain. Cysteine 517 and cysteine 535 are joined by a disulfide. UDP-N-acetyl-alpha-D-galactosamine-binding residues include aspartate 519, glutamate 522, histidine 536, and asparagine 541. Disulfide bonds link cysteine 561-cysteine 574 and cysteine 605-cysteine 618.

This sequence belongs to the glycosyltransferase 2 family. GalNAc-T subfamily. Requires Mn(2+) as cofactor. As to expression, highly expressed in the reproductive tract, principally in the testis and uterus, and to a lesser degree in the cervix with only trace levels in the ovary. Also expressed at high level in sublingual gland, stomach and colon, with more moderate amounts present in the submandibular and parotid gland as well as the kidney.

It is found in the golgi apparatus. The protein resides in the golgi stack membrane. The enzyme catalyses L-seryl-[protein] + UDP-N-acetyl-alpha-D-galactosamine = a 3-O-[N-acetyl-alpha-D-galactosaminyl]-L-seryl-[protein] + UDP + H(+). It carries out the reaction L-threonyl-[protein] + UDP-N-acetyl-alpha-D-galactosamine = a 3-O-[N-acetyl-alpha-D-galactosaminyl]-L-threonyl-[protein] + UDP + H(+). Its pathway is protein modification; protein glycosylation. Catalyzes the initial reaction in O-linked oligosaccharide biosynthesis, the transfer of an N-acetyl-D-galactosamine residue to a serine or threonine residue on the protein receptor. Has activity toward HIV envelope glycoprotein gp120. Has activity towards EA2, MUC2 and MUC5. Probably glycosylates fibronectin in vivo. Glycosylates FGF23. The chain is Polypeptide N-acetylgalactosaminyltransferase 3 (Galnt3) from Mus musculus (Mouse).